A 488-amino-acid chain; its full sequence is Ribulose bisphosphate carboxylase large chain (488 aa).

N127 and T177 together coordinate substrate. K179 (proton acceptor) is an active-site residue. Residue K181 participates in substrate binding. K205, D207, and E208 together coordinate Mg(2+). Residue K205 is modified to N6-carboxylysine. H297 (proton acceptor) is an active-site residue. Positions 298, 330, and 382 each coordinate substrate.

This sequence belongs to the RuBisCO large chain family. Type I subfamily. As to quaternary structure, heterohexadecamer of 8 large chains and 8 small chains. Mg(2+) is required as a cofactor.

Its subcellular location is the plastid. The protein resides in the chloroplast. The enzyme catalyses 2 (2R)-3-phosphoglycerate + 2 H(+) = D-ribulose 1,5-bisphosphate + CO2 + H2O. The catalysed reaction is D-ribulose 1,5-bisphosphate + O2 = 2-phosphoglycolate + (2R)-3-phosphoglycerate + 2 H(+). Functionally, ruBisCO catalyzes two reactions: the carboxylation of D-ribulose 1,5-bisphosphate, the primary event in carbon dioxide fixation, as well as the oxidative fragmentation of the pentose substrate in the photorespiration process. Both reactions occur simultaneously and in competition at the same active site. This is Ribulose bisphosphate carboxylase large chain from Porphyridium aerugineum (Red microalga).